The following is a 382-amino-acid chain: POU domain, class 3, transcription factor 2-A (382 aa).

3 disordered regions span residues Pro69–Gly136, Gly150–Ser206, and Glu348–Gln382. The segment covering Ser122–Gly136 has biased composition (polar residues). Over residues Leu165 to His178 the composition is skewed to basic and acidic residues. Positions Gln179–Gly194 are enriched in low complexity. The region spanning Glu201–Asp275 is the POU-specific domain. The segment at residues Lys293 to Thr352 is a DNA-binding region (homeobox).

The protein belongs to the POU transcription factor family. Class-3 subfamily. Expressed in the developing brain and spinal cord. Also found in a restricted region of the auditory vesicle during development. In the adult, expression is restricted to the brain.

The protein resides in the nucleus. Its function is as follows. Transcription factor that may be implicated in patterning of the central nervous system during early development. The chain is POU domain, class 3, transcription factor 2-A (pou3f2-a) from Xenopus laevis (African clawed frog).